A 205-amino-acid polypeptide reads, in one-letter code: StAR-related lipid transfer protein 4 (205 aa).

The START domain maps to 1 to 205 (MEGLSDVASF…NFYGDLRKAL (205 aa)).

The catalysed reaction is cholesterol(in) = cholesterol(out). In terms of biological role, involved in the intracellular transport of cholesterol. Binds cholesterol or other sterols. The chain is StAR-related lipid transfer protein 4 (STARD4) from Homo sapiens (Human).